The primary structure comprises 380 residues: Cytochrome b (380 aa).

4 helical membrane-spanning segments follow: residues 34 to 54 (FGSL…LLAA), 78 to 99 (WLIR…YLHI), 114 to 134 (WNTG…GYVL), and 179 to 199 (FFTL…IHLT). Heme b is bound by residues His84 and His98. The heme b site is built by His183 and His197. His202 contributes to the a ubiquinone binding site. A run of 4 helical transmembrane segments spans residues 227–247 (LKDI…ALFS), 289–309 (LGGV…PLLH), 321–341 (LSQL…WVGS), and 348–368 (FMII…VLFP).

The protein belongs to the cytochrome b family. As to quaternary structure, the cytochrome bc1 complex contains 11 subunits: 3 respiratory subunits (MT-CYB, CYC1 and UQCRFS1), 2 core proteins (UQCRC1 and UQCRC2) and 6 low-molecular weight proteins (UQCRH/QCR6, UQCRB/QCR7, UQCRQ/QCR8, UQCR10/QCR9, UQCR11/QCR10 and a cleavage product of UQCRFS1). This cytochrome bc1 complex then forms a dimer. Heme b serves as cofactor.

The protein resides in the mitochondrion inner membrane. Functionally, component of the ubiquinol-cytochrome c reductase complex (complex III or cytochrome b-c1 complex) that is part of the mitochondrial respiratory chain. The b-c1 complex mediates electron transfer from ubiquinol to cytochrome c. Contributes to the generation of a proton gradient across the mitochondrial membrane that is then used for ATP synthesis. The protein is Cytochrome b (MT-CYB) of Anthropoides virgo (Demoiselle crane).